Reading from the N-terminus, the 660-residue chain is Glycine betaine transporter (660 aa).

Over 1–13 the chain is Cytoplasmic; sequence MPSKTSSRFANIN. A helical membrane pass occupies residues 14 to 34; it reads PNVFVSTIMIIAIFLAIVILA. Residues 35–52 are Periplasmic-facing; sequence PDAFELLTQQLKNWITES. The helical transmembrane segment at 53–73 threads the bilayer; sequence FSWFYVLSVAFFLIVLGYIAC. Residues 74–93 lie on the Cytoplasmic side of the membrane; sequence SSSGKIKLGPDHSQPDYSNS. A helical transmembrane segment spans residues 94 to 114; the sequence is SWFAMLFTAGMGIGLMFFGIA. The Periplasmic segment spans residues 115–139; sequence EPIMHYVSPPSGEPETILAAQQSMR. A helical membrane pass occupies residues 140 to 160; sequence VTFFHWGLHAWGIYAIVALSL. At 161 to 195 the chain is on the cytoplasmic side; it reads SYFAYRHDLPLKIRSSLYPLIGKKIYGPMGDAVDT. The helical transmembrane segment at 196–216 threads the bilayer; sequence FATIGTIFGVATTLGFGVTQI. Residues 217–230 are Periplasmic-facing; that stretch reads SSGLNYLFGFEPTS. Residues 231–251 form a helical membrane-spanning segment; it reads FSKVVLIIIVSAMAALSVGLG. Over 252–263 the chain is Cytoplasmic; that stretch reads LDKGVKRLAELN. Residues 264–284 form a helical membrane-spanning segment; sequence LVLAVTLLAFVFFTSATVYLL. The Periplasmic portion of the chain corresponds to 285 to 316; it reads QTTIQNTGQYISNLFEMTFNLYAYQPNGWIGG. A helical transmembrane segment spans residues 317–337; sequence WTIMYWAWWISWSPFVGMFIA. Over 338–347 the chain is Cytoplasmic; sequence RVSRGRTIRE. The helical transmembrane segment at 348–368 threads the bilayer; that stretch reads FIIGVMLIPTGFTLIWMGFMG. Residues 369–401 lie on the Periplasmic side of the membrane; it reads NAGLYSILHDGNLSLLNAVQRDSSVALFEFLHS. The chain crosses the membrane as a helical span at residues 402-422; the sequence is LPFSGVMSLLATVLVVLFFVT. Topologically, residues 423-446 are cytoplasmic; that stretch reads SADSGALVVDYLTAKSEDSPVWQR. A helical transmembrane segment spans residues 447–467; that stretch reads LFWIVVMAGLAIILLLAGGLT. Topologically, residues 468–471 are periplasmic; sequence ALQS. The helical transmembrane segment at 472 to 492 threads the bilayer; the sequence is ATIMSALPFTFIMLLICWGLI. At 493–660 the chain is on the cytoplasmic side; it reads KALRIDSTKM…LSVMRAQTGN (168 aa).

It belongs to the BCCT transporter (TC 2.A.15) family.

It localises to the cell inner membrane. With respect to regulation, uptake is activated by NaCl, KCl or mannose gradients across the cell membrane. Inhibited by the protonophore 3,3',4',5-tetrachlorosalicylanilide (TCS). Energy-dependent uptake of glycine betaine in response to high salinity. The chain is Glycine betaine transporter from Acinetobacter baylyi (strain ATCC 33305 / BD413 / ADP1).